The sequence spans 406 residues: Probable tRNA sulfurtransferase (406 aa).

The 107-residue stretch at 60–166 (DQVMNRLKLV…LNGIFLSSET (107 aa)) folds into the THUMP domain. Residues 184–185 (MM), 209–210 (HF), Arg-266, Gly-288, and Gln-297 each bind ATP.

Belongs to the ThiI family.

It is found in the cytoplasm. It carries out the reaction [ThiI sulfur-carrier protein]-S-sulfanyl-L-cysteine + a uridine in tRNA + 2 reduced [2Fe-2S]-[ferredoxin] + ATP + H(+) = [ThiI sulfur-carrier protein]-L-cysteine + a 4-thiouridine in tRNA + 2 oxidized [2Fe-2S]-[ferredoxin] + AMP + diphosphate. It catalyses the reaction [ThiS sulfur-carrier protein]-C-terminal Gly-Gly-AMP + S-sulfanyl-L-cysteinyl-[cysteine desulfurase] + AH2 = [ThiS sulfur-carrier protein]-C-terminal-Gly-aminoethanethioate + L-cysteinyl-[cysteine desulfurase] + A + AMP + 2 H(+). It participates in cofactor biosynthesis; thiamine diphosphate biosynthesis. In terms of biological role, catalyzes the ATP-dependent transfer of a sulfur to tRNA to produce 4-thiouridine in position 8 of tRNAs, which functions as a near-UV photosensor. Also catalyzes the transfer of sulfur to the sulfur carrier protein ThiS, forming ThiS-thiocarboxylate. This is a step in the synthesis of thiazole, in the thiamine biosynthesis pathway. The sulfur is donated as persulfide by IscS. The protein is Probable tRNA sulfurtransferase of Limosilactobacillus reuteri subsp. reuteri (strain JCM 1112) (Lactobacillus reuteri).